Consider the following 103-residue polypeptide: Large ribosomal subunit protein uL23 (103 aa).

The protein belongs to the universal ribosomal protein uL23 family. Part of the 50S ribosomal subunit. Contacts protein L29, and trigger factor when it is bound to the ribosome.

In terms of biological role, one of the early assembly proteins it binds 23S rRNA. One of the proteins that surrounds the polypeptide exit tunnel on the outside of the ribosome. Forms the main docking site for trigger factor binding to the ribosome. In Prochlorococcus marinus (strain NATL1A), this protein is Large ribosomal subunit protein uL23.